Here is a 555-residue protein sequence, read N- to C-terminus: Galectin-3-binding protein (555 aa).

The N-terminal stretch at 1 to 18 is a signal peptide; the sequence is MAPLRLFWIWLLVVGTRG. Residues 24 to 124 form the SRCR domain; the sequence is MRLADGGSAN…HDKDASVICT (101 aa). 3 disulfides stabilise this stretch: cysteine 49-cysteine 113, cysteine 62-cysteine 123, and cysteine 93-cysteine 103. Asparagine 69 carries an N-linked (GlcNAc...) asparagine glycan. Asparagine 125 is a glycosylation site (N-linked (GlcNAc...) asparagine). Residues 153–221 enclose the BTB domain; the sequence is CDLFITVKVR…LYSRRIDVSL (69 aa). Residues 260–360 form the BACK domain; that stretch reads PLELYAYALA…MPPQDLFSLQ (101 aa). 3 N-linked (GlcNAc...) asparagine glycosylation sites follow: asparagine 362, asparagine 398, and asparagine 550.

Homodimers and homomultimers. The multimers form ring-like structures with a diameter of 30-40 nm. Binds LGALS1 and LGALS3. Binds ITGB1, COL4A1, COL5A1, COL6A1, FN1 and NID. Interacts with the gamma-tubulin ring complex (gamma-TuRC), composed of gamma-tubulin, TUBGCP2, TUBGCP3, TUBGCP4, TUBGCP5 and TUBGCP6. The unglycosylated form interacts with PDE4DIP; this interaction, which is PDE4DIP isoform-specific, may connect a pericentrosomal complex, made of AKAP9, CDK5RAP2, EB1/MAPRE1 and PDE4DIP, to the gamma-tubulin ring complex (gamma-TuRC) to promote microtubule assembly and acetylation.

Its subcellular location is the secreted. It is found in the extracellular space. The protein resides in the extracellular matrix. Promotes integrin-mediated cell adhesion. May stimulate host defense against viruses and tumor cells. This Bos taurus (Bovine) protein is Galectin-3-binding protein (LGALS3BP).